We begin with the raw amino-acid sequence, 582 residues long: Pineapple eye protein (582 aa).

The segment at 6–44 (ELQCLICKYSDTDDLVFGEWMIVRNLQVHYFCLLLSTHL) adopts a C2HC pre-PHD-type zinc-finger fold. Residues 6-119 (ELQCLICKYS…QYKSYCYKCR (114 aa)) form an extended PHD domain (ePHD) region. A PHD-type; atypical zinc finger spans residues 72–119 (RKCWYCNKIGASLQCDRCRSLFHLKCGLENRAVFEFCGQYKSYCYKCR). Disordered regions lie at residues 292 to 311 (PART…DGSF) and 323 to 422 (RSLT…ASEI). A compositionally biased stretch (polar residues) spans 340–363 (SSNITVIFSQPKSNATSERLSLSP). The span at 383-399 (SIDENHSPQPIARRDTS) shows a compositional bias: basic and acidic residues.

In terms of biological role, required for survival of imaginal disk cells possibly by regulation of cell apoptosis. Required for germline stem cell self-renewal through mediation of BMP signaling. In Drosophila melanogaster (Fruit fly), this protein is Pineapple eye protein.